The chain runs to 453 residues: Validoxylamine A glucosyltransferase (453 aa).

It belongs to the glycosyltransferase 2 family. Mn(2+) serves as cofactor.

The enzyme catalyses validoxylamine A + UDP-alpha-D-glucose = validamycin A + UDP + H(+). Functionally, involved in the biosynthesis of the antifungal agent validamycin A. Catalyzes the final attachment of glucose from UDP-alpha-D-glucose to validoxylamine A to yield validamycin A. The polypeptide is Validoxylamine A glucosyltransferase (Streptomyces hygroscopicus subsp. limoneus).